Reading from the N-terminus, the 476-residue chain is Proline--tRNA ligase (476 aa).

The protein belongs to the class-II aminoacyl-tRNA synthetase family. ProS type 3 subfamily. Homodimer.

The protein resides in the cytoplasm. It catalyses the reaction tRNA(Pro) + L-proline + ATP = L-prolyl-tRNA(Pro) + AMP + diphosphate. Its function is as follows. Catalyzes the attachment of proline to tRNA(Pro) in a two-step reaction: proline is first activated by ATP to form Pro-AMP and then transferred to the acceptor end of tRNA(Pro). The polypeptide is Proline--tRNA ligase (Cenarchaeum symbiosum (strain A)).